The following is a 162-amino-acid chain: Phospholipase A and acyltransferase 2 (162 aa).

The Cytoplasmic segment spans residues 1 to 133 (MALARPRPRL…VSRSDQVTGA (133 aa)). The LRAT domain maps to 13 to 129 (LIEISRFGYA…LRYGVSRSDQ (117 aa)). Active-site residues include His-23 and His-35. Cys-113 functions as the Acyl-thioester intermediate in the catalytic mechanism. A helical membrane pass occupies residues 134–154 (VTTVGVAAGLLAAASLVGILL). Topologically, residues 155–162 (ARSKRERQ) are lumenal.

This sequence belongs to the H-rev107 family. As to expression, expressed in liver, kidney, small intestine testis and colon. Undetectable in testis, placenta, salivary gland and fetal brain.

It is found in the cytoplasm. It localises to the membrane. The enzyme catalyses a 1,2-diacyl-sn-glycero-3-phosphocholine + H2O = a 1-acyl-sn-glycero-3-phosphocholine + a fatty acid + H(+). It carries out the reaction a 1,2-diacyl-sn-glycero-3-phosphocholine + H2O = a 2-acyl-sn-glycero-3-phosphocholine + a fatty acid + H(+). The catalysed reaction is a 1,2-diacyl-sn-glycero-3-phosphoethanolamine + a 1,2-diacyl-sn-glycero-3-phosphocholine = an N-acyl-1,2-diacyl-sn-glycero-3-phosphoethanolamine + a 1-acyl-sn-glycero-3-phosphocholine + H(+). It catalyses the reaction a 1,2-diacyl-sn-glycero-3-phosphoethanolamine + a 1,2-diacyl-sn-glycero-3-phosphocholine = an N-acyl-1,2-diacyl-sn-glycero-3-phosphoethanolamine + a 2-acyl-sn-glycero-3-phosphocholine + H(+). The enzyme catalyses 1,2-dihexadecanoyl-sn-glycero-3-phosphocholine + H2O = 1-hexadecanoyl-sn-glycero-3-phosphocholine + hexadecanoate + H(+). It carries out the reaction 1,2-dihexadecanoyl-sn-glycero-3-phosphocholine + H2O = 2-hexadecanoyl-sn-glycero-3-phosphocholine + hexadecanoate + H(+). The catalysed reaction is 1-hexadecanoyl-2-(9Z-octadecenoyl)-sn-glycero-3-phosphocholine + H2O = 2-(9Z-octadecenoyl)-sn-glycero-3-phosphocholine + hexadecanoate + H(+). It catalyses the reaction 1-hexadecanoyl-2-(9Z-octadecenoyl)-sn-glycero-3-phosphocholine + H2O = 1-hexadecanoyl-sn-glycero-3-phosphocholine + (9Z)-octadecenoate + H(+). The enzyme catalyses 1-hexadecanoyl-2-(5Z,8Z,11Z,14Z-eicosatetraenoyl)-sn-glycero-3-phosphocholine + H2O = 2-(5Z,8Z,11Z,14Z)-eicosatetraenoyl-sn-glycero-3-phosphocholine + hexadecanoate + H(+). It carries out the reaction 1-hexadecanoyl-2-(9Z,12Z-octadecadienoyl)-sn-glycero-3-phosphoethanolamine + H2O = 1-hexadecanoyl-sn-glycero-3-phosphoethanolamine + (9Z,12Z)-octadecadienoate + H(+). The catalysed reaction is 1-hexadecanoyl-2-(9Z,12Z-octadecadienoyl)-sn-glycero-3-phosphoethanolamine + H2O = 2-(9Z,12Z)-octadecadienoyl-sn-glycero-3-phosphoethanolamine + hexadecanoate + H(+). It catalyses the reaction 1-hexadecanoyl-2-(5Z,8Z,11Z,14Z-eicosatetraenoyl)-sn-glycero-3-phosphoethanolamine + H2O = 1-hexadecanoyl-sn-glycero-3-phosphoethanolamine + (5Z,8Z,11Z,14Z)-eicosatetraenoate + H(+). The enzyme catalyses 1-hexadecanoyl-2-(5Z,8Z,11Z,14Z-eicosatetraenoyl)-sn-glycero-3-phosphoethanolamine + H2O = 2-(5Z,8Z,11Z,14Z)-eicosatetraenoyl-sn-glycero-3-phosphoethanolamine + hexadecanoate + H(+). It carries out the reaction 1,2-di-(9Z-octadecenoyl)-sn-glycero-3-phosphoethanolamine + 1,2-dihexadecanoyl-sn-glycero-3-phosphocholine = N-hexadecanoyl-1,2-di-(9Z-octadecenoyl)-sn-glycero-3-phosphoethanolamine + 2-hexadecanoyl-sn-glycero-3-phosphocholine + H(+). The catalysed reaction is 1,2-di-(9Z-octadecenoyl)-sn-glycero-3-phosphoethanolamine + 1,2-dihexadecanoyl-sn-glycero-3-phosphocholine = N-hexadecanoyl-1,2-di-(9Z-octadecenoyl)-sn-glycero-3-phosphoethanolamine + 1-hexadecanoyl-sn-glycero-3-phosphocholine + H(+). It catalyses the reaction 1-hexanoyl-2-acyl-sn-glycero-3-phosphocholine + H2O = 1-hexanoyl-sn-glycero-3-phosphocholine + a fatty acid + H(+). The enzyme catalyses 1,2-diheptadecanoyl-sn-glycero-3-phosphoethanolamine + 1-(9Z-octadecenoyl)-2-hexadecanoyl-sn-glycero-3-phosphocholine = 1,2-diheptadecanoyl-sn-glycero-3-phospho-N-hexadecanoyl-ethanolamine + 1-(9Z-octadecenoyl)-sn-glycero-3-phosphocholine + H(+). It carries out the reaction 1,2-diheptadecanoyl-sn-glycero-3-phosphoethanolamine + 1-(9Z-octadecenoyl)-2-hexadecanoyl-sn-glycero-3-phosphocholine = 1,2-diheptadecanoyl-sn-glycero-3-phospho-N-(9Z-octadecenoyl)-ethanolamine + 2-hexadecanoyl-sn-glycero-3-phosphocholine + H(+). The catalysed reaction is 1,2-dihexanoyl-sn-glycero-3-phosphocholine + 1,2-diheptanoyl-sn-glycero-3-phosphocholine = 1-heptanoyl-2-hexanoyl-sn-glycero-3-phosphocholine + 1-hexanoyl-2-heptanoyl-sn-glycero-3-phosphocholine. It catalyses the reaction 1,2-diheptanoyl-sn-glycero-3-phosphocholine + 1,2-dihexadecanoyl-sn-glycero-3-phosphocholine = 1-hexadecanoyl-2-heptanoyl-sn-glycero-3-phosphocholine + 1-heptanoyl-2-hexadecanoyl-sn-glycero-3-phosphocholine. The enzyme catalyses 1,2-dihexanoyl-sn-glycero-3-phosphoethanolamine + 1,2-diheptanoyl-sn-glycero-3-phosphocholine = 1-heptanoyl-2-hexanoyl-sn-glycero-3-phosphoethanolamine + 1-hexanoyl-2-heptanoyl-sn-glycero-3-phosphocholine. It carries out the reaction 1-hexanoyl-2-acyl-sn-glycero-3-phosphocholine + H2O = hexanoate + a 2-acyl-sn-glycero-3-phosphocholine + H(+). The catalysed reaction is 1,2-dihexanoyl-sn-glycero-3-phosphoethanolamine + 2-heptanoyl-sn-glycero-3-phosphocholine = hexanoyl-sn-glycero-3-phosphoethanolamine + 1-hexanoyl-2-heptanoyl-sn-glycero-3-phosphocholine. Exhibits both phospholipase A1/2 and acyltransferase activities. Shows phospholipase A1 (PLA1) and A2 (PLA2) activity, catalyzing the calcium-independent release of fatty acids from the sn-1 or sn-2 position of glycerophospholipids. For most substrates, PLA1 activity is much higher than PLA2 activity. Shows O-acyltransferase activity, catalyzing the transfer of a fatty acyl group from glycerophospholipid to the hydroxyl group of lysophospholipid. Shows N-acyltransferase activity, catalyzing the calcium-independent transfer of a fatty acyl group at the sn-1 position of phosphatidylcholine (PC) and other glycerophospholipids to the primary amine of phosphatidylethanolamine (PE), forming N-acylphosphatidylethanolamine (NAPE), which serves as precursor for N-acylethanolamines (NAEs). Catalyzes N-acylation of PE using both sn-1 and sn-2 palmitoyl groups of PC as acyl donor. Exhibits high phospholipase A1/2 activity and low N-acyltransferase activity. This is Phospholipase A and acyltransferase 2 from Homo sapiens (Human).